Here is a 155-residue protein sequence, read N- to C-terminus: Endoribonuclease YbeY (155 aa).

Positions 114, 118, and 124 each coordinate Zn(2+).

This sequence belongs to the endoribonuclease YbeY family. It depends on Zn(2+) as a cofactor.

The protein resides in the cytoplasm. In terms of biological role, single strand-specific metallo-endoribonuclease involved in late-stage 70S ribosome quality control and in maturation of the 3' terminus of the 16S rRNA. This chain is Endoribonuclease YbeY, found in Shigella flexneri serotype 5b (strain 8401).